Here is a 328-residue protein sequence, read N- to C-terminus: Malate dehydrogenase 2 (328 aa).

Position 12–18 (12–18 (GAAGQIA)) interacts with NAD(+). Positions 93 and 99 each coordinate substrate. Residues asparagine 106, glutamine 113, and 130 to 132 (VGN) each bind NAD(+). Asparagine 132 and arginine 163 together coordinate substrate. Histidine 188 functions as the Proton acceptor in the catalytic mechanism.

This sequence belongs to the LDH/MDH superfamily. MDH type 2 family.

It catalyses the reaction (S)-malate + NAD(+) = oxaloacetate + NADH + H(+). Its function is as follows. Catalyzes the reversible oxidation of malate to oxaloacetate. The chain is Malate dehydrogenase 2 from Burkholderia vietnamiensis (strain G4 / LMG 22486) (Burkholderia cepacia (strain R1808)).